We begin with the raw amino-acid sequence, 1104 residues long: DNA polymerase delta catalytic subunit (1104 aa).

Residues 1–60 (MKRSIVTGGGNNDKKFKAQPPPKNNYRGGGDDEEDDEFEEDDDEDEGDEFGEEEDEDDID) are disordered. The span at 31–60 (DDEEDDEFEEDDDEDEGDEFGEEEDEDDID) shows a compositional bias: acidic residues. 4 residues coordinate Zn(2+): C1012, C1015, C1027, and C1030. A CysA-type zinc finger spans residues 1012–1030 (CMNCPKELTDTESTTCINC). [4Fe-4S] cluster is bound by residues C1059, C1062, C1072, and C1077. The short motif at 1059 to 1077 (CQRCSGSLHQPVLCSNRDC) is the CysB motif element.

Belongs to the DNA polymerase type-B family. Heterotetramer composed of subunits of 125 kDa, 50 kDa, 66 kDa and 12 kDa. The 125 kDa subunit contains the polymerase active site and most likely the active site for the 3'-5' exonuclease activity. It depends on [4Fe-4S] cluster as a cofactor.

The protein localises to the nucleus. It catalyses the reaction DNA(n) + a 2'-deoxyribonucleoside 5'-triphosphate = DNA(n+1) + diphosphate. Its function is as follows. Possesses two enzymatic activities: DNA synthesis (polymerase) and an exonucleolytic activity that degrades single stranded DNA in the 3'- to 5'-direction. This is DNA polymerase delta catalytic subunit (pold1) from Dictyostelium discoideum (Social amoeba).